The chain runs to 522 residues: AAA ATPase forming ring-shaped complexes (522 aa).

The tract at residues 1–26 (MGQEKHTDAASQSRDPEAVAAHENDQ) is disordered. Positions 20–57 (AAHENDQLRQRNHALAKALTRATEELRKAKAQLEQFMA) form a coiled coil. Residue 248–253 (GNGKTL) participates in ATP binding.

Belongs to the AAA ATPase family. Homohexamer. Assembles into a hexameric ring structure.

The sequence is that of AAA ATPase forming ring-shaped complexes from Bifidobacterium animalis subsp. lactis (strain AD011).